Here is a 517-residue protein sequence, read N- to C-terminus: GMP synthase [glutamine-hydrolyzing] (517 aa).

One can recognise a Glutamine amidotransferase type-1 domain in the interval 9–199; the sequence is RILILDFGSQ…VLGVCGCERL (191 aa). C86 serves as the catalytic Nucleophile. Active-site residues include H173 and E175. The GMPS ATP-PPase domain occupies 200-392; sequence WTSESIIEDA…LGLPYEMLYR (193 aa). 227 to 233 contributes to the ATP binding site; sequence SGGVDSS.

Homodimer.

The catalysed reaction is XMP + L-glutamine + ATP + H2O = GMP + L-glutamate + AMP + diphosphate + 2 H(+). It functions in the pathway purine metabolism; GMP biosynthesis; GMP from XMP (L-Gln route): step 1/1. Catalyzes the synthesis of GMP from XMP. The polypeptide is GMP synthase [glutamine-hydrolyzing] (Vibrio vulnificus (strain YJ016)).